A 304-amino-acid chain; its full sequence is Urease accessory protein UreD (304 aa).

It belongs to the UreD family. UreD, UreF and UreG form a complex that acts as a GTP-hydrolysis-dependent molecular chaperone, activating the urease apoprotein by helping to assemble the nickel containing metallocenter of UreC. The UreE protein probably delivers the nickel.

Its subcellular location is the cytoplasm. Required for maturation of urease via the functional incorporation of the urease nickel metallocenter. The sequence is that of Urease accessory protein UreD from Haloquadratum walsbyi (strain DSM 16790 / HBSQ001).